The sequence spans 463 residues: ATP synthase subunit beta (463 aa).

Residue 151 to 158 coordinates ATP; it reads GGAGVGKT.

The protein belongs to the ATPase alpha/beta chains family. F-type ATPases have 2 components, CF(1) - the catalytic core - and CF(0) - the membrane proton channel. CF(1) has five subunits: alpha(3), beta(3), gamma(1), delta(1), epsilon(1). CF(0) has three main subunits: a(1), b(2) and c(9-12). The alpha and beta chains form an alternating ring which encloses part of the gamma chain. CF(1) is attached to CF(0) by a central stalk formed by the gamma and epsilon chains, while a peripheral stalk is formed by the delta and b chains.

The protein resides in the cell membrane. The enzyme catalyses ATP + H2O + 4 H(+)(in) = ADP + phosphate + 5 H(+)(out). Produces ATP from ADP in the presence of a proton gradient across the membrane. The catalytic sites are hosted primarily by the beta subunits. This chain is ATP synthase subunit beta, found in Clostridium botulinum (strain Loch Maree / Type A3).